The chain runs to 723 residues: Catalase-peroxidase (723 aa).

The segment at residues W89–Y212 is a cross-link (tryptophyl-tyrosyl-methioninium (Trp-Tyr) (with M-238)). Residue H90 is the Proton acceptor of the active site. The segment at residues Y212–M238 is a cross-link (tryptophyl-tyrosyl-methioninium (Tyr-Met) (with W-89)). Position 253 (H253) interacts with heme b.

Belongs to the peroxidase family. Peroxidase/catalase subfamily. In terms of assembly, homodimer or homotetramer. Heme b serves as cofactor. Formation of the three residue Trp-Tyr-Met cross-link is important for the catalase, but not the peroxidase activity of the enzyme.

It catalyses the reaction H2O2 + AH2 = A + 2 H2O. It carries out the reaction 2 H2O2 = O2 + 2 H2O. Bifunctional enzyme with both catalase and broad-spectrum peroxidase activity. The chain is Catalase-peroxidase from Shewanella baltica (strain OS185).